A 479-amino-acid chain; its full sequence is Ribosomal RNA small subunit methyltransferase F (479 aa).

Residues 125–131, E149, D176, and D194 contribute to the S-adenosyl-L-methionine site; that span reads AAAPGSK. The active-site Nucleophile is C247.

This sequence belongs to the class I-like SAM-binding methyltransferase superfamily. RsmB/NOP family.

Its subcellular location is the cytoplasm. The enzyme catalyses cytidine(1407) in 16S rRNA + S-adenosyl-L-methionine = 5-methylcytidine(1407) in 16S rRNA + S-adenosyl-L-homocysteine + H(+). In terms of biological role, specifically methylates the cytosine at position 1407 (m5C1407) of 16S rRNA. The polypeptide is Ribosomal RNA small subunit methyltransferase F (Escherichia coli O7:K1 (strain IAI39 / ExPEC)).